The primary structure comprises 355 residues: Histidinol-phosphate aminotransferase (355 aa).

Lys-222 is modified (N6-(pyridoxal phosphate)lysine).

The protein belongs to the class-II pyridoxal-phosphate-dependent aminotransferase family. Histidinol-phosphate aminotransferase subfamily. It depends on pyridoxal 5'-phosphate as a cofactor.

It catalyses the reaction L-histidinol phosphate + 2-oxoglutarate = 3-(imidazol-4-yl)-2-oxopropyl phosphate + L-glutamate. It participates in amino-acid biosynthesis; L-histidine biosynthesis; L-histidine from 5-phospho-alpha-D-ribose 1-diphosphate: step 7/9. This Natronomonas pharaonis (strain ATCC 35678 / DSM 2160 / CIP 103997 / JCM 8858 / NBRC 14720 / NCIMB 2260 / Gabara) (Halobacterium pharaonis) protein is Histidinol-phosphate aminotransferase.